The chain runs to 147 residues: Ubiquitin-conjugating enzyme E2-16 kDa (147 aa).

Residues 1-147 (MAFKRINKEL…AREWTRKYAI (147 aa)) enclose the UBC core domain. C107 (glycyl thioester intermediate) is an active-site residue.

The protein belongs to the ubiquitin-conjugating enzyme family.

The enzyme catalyses S-ubiquitinyl-[E1 ubiquitin-activating enzyme]-L-cysteine + [E2 ubiquitin-conjugating enzyme]-L-cysteine = [E1 ubiquitin-activating enzyme]-L-cysteine + S-ubiquitinyl-[E2 ubiquitin-conjugating enzyme]-L-cysteine.. The protein operates within protein modification; protein ubiquitination. Functionally, catalyzes the covalent attachment of ubiquitin to other proteins. May also mediate selective proteolysis pathways. This is Ubiquitin-conjugating enzyme E2-16 kDa (UBC1) from Colletotrichum gloeosporioides (Anthracnose fungus).